Consider the following 510-residue polypeptide: Lysine--tRNA ligase (510 aa).

Positions 420 and 427 each coordinate Mg(2+).

The protein belongs to the class-II aminoacyl-tRNA synthetase family. Homodimer. Requires Mg(2+) as cofactor.

The protein resides in the cytoplasm. It carries out the reaction tRNA(Lys) + L-lysine + ATP = L-lysyl-tRNA(Lys) + AMP + diphosphate. The protein is Lysine--tRNA ligase of Vibrio vulnificus (strain CMCP6).